The sequence spans 156 residues: SsrA-binding protein (156 aa).

This sequence belongs to the SmpB family.

It localises to the cytoplasm. In terms of biological role, required for rescue of stalled ribosomes mediated by trans-translation. Binds to transfer-messenger RNA (tmRNA), required for stable association of tmRNA with ribosomes. tmRNA and SmpB together mimic tRNA shape, replacing the anticodon stem-loop with SmpB. tmRNA is encoded by the ssrA gene; the 2 termini fold to resemble tRNA(Ala) and it encodes a 'tag peptide', a short internal open reading frame. During trans-translation Ala-aminoacylated tmRNA acts like a tRNA, entering the A-site of stalled ribosomes, displacing the stalled mRNA. The ribosome then switches to translate the ORF on the tmRNA; the nascent peptide is terminated with the 'tag peptide' encoded by the tmRNA and targeted for degradation. The ribosome is freed to recommence translation, which seems to be the essential function of trans-translation. The protein is SsrA-binding protein of Clostridium botulinum (strain Alaska E43 / Type E3).